A 206-amino-acid chain; its full sequence is Ribosomal RNA small subunit methyltransferase G (206 aa).

S-adenosyl-L-methionine is bound by residues G74, L79, 125-126 (VE), and R140.

It belongs to the methyltransferase superfamily. RNA methyltransferase RsmG family.

It is found in the cytoplasm. It catalyses the reaction guanosine(527) in 16S rRNA + S-adenosyl-L-methionine = N(7)-methylguanosine(527) in 16S rRNA + S-adenosyl-L-homocysteine. In terms of biological role, specifically methylates the N7 position of guanine in position 527 of 16S rRNA. This Shewanella frigidimarina (strain NCIMB 400) protein is Ribosomal RNA small subunit methyltransferase G.